We begin with the raw amino-acid sequence, 740 residues long: Elongation factor 2 (740 aa).

A tr-type G domain is found at 23–264 (AQIRNAGTLA…MIIEHVPPPN (242 aa)). GTP is bound by residues 32–39 (AHVDHGKT), 98–102 (DTPGH), and 152–155 (NKID). The residue at position 605 (His605) is a Diphthamide.

This sequence belongs to the TRAFAC class translation factor GTPase superfamily. Classic translation factor GTPase family. EF-G/EF-2 subfamily.

The protein localises to the cytoplasm. In terms of biological role, catalyzes the GTP-dependent ribosomal translocation step during translation elongation. During this step, the ribosome changes from the pre-translocational (PRE) to the post-translocational (POST) state as the newly formed A-site-bound peptidyl-tRNA and P-site-bound deacylated tRNA move to the P and E sites, respectively. Catalyzes the coordinated movement of the two tRNA molecules, the mRNA and conformational changes in the ribosome. In Pyrobaculum arsenaticum (strain DSM 13514 / JCM 11321 / PZ6), this protein is Elongation factor 2.